Reading from the N-terminus, the 139-residue chain is Holo-[acyl-carrier-protein] synthase (139 aa).

Mg(2+)-binding residues include Asp8 and Glu57.

This sequence belongs to the P-Pant transferase superfamily. AcpS family. Mg(2+) is required as a cofactor.

It localises to the cytoplasm. The enzyme catalyses apo-[ACP] + CoA = holo-[ACP] + adenosine 3',5'-bisphosphate + H(+). Its function is as follows. Transfers the 4'-phosphopantetheine moiety from coenzyme A to a Ser of acyl-carrier-protein. This is Holo-[acyl-carrier-protein] synthase from Sinorhizobium fredii (strain NBRC 101917 / NGR234).